Consider the following 366-residue polypeptide: 3-dehydroquinate synthase (366 aa).

Residues 107-111 (GVIGD), 131-132 (TS), Lys-144, and Lys-153 contribute to the NAD(+) site. Zn(2+)-binding residues include Glu-186, His-251, and His-268.

This sequence belongs to the sugar phosphate cyclases superfamily. Dehydroquinate synthase family. The cofactor is Co(2+). It depends on Zn(2+) as a cofactor. NAD(+) serves as cofactor.

The protein localises to the cytoplasm. The catalysed reaction is 7-phospho-2-dehydro-3-deoxy-D-arabino-heptonate = 3-dehydroquinate + phosphate. It functions in the pathway metabolic intermediate biosynthesis; chorismate biosynthesis; chorismate from D-erythrose 4-phosphate and phosphoenolpyruvate: step 2/7. In terms of biological role, catalyzes the conversion of 3-deoxy-D-arabino-heptulosonate 7-phosphate (DAHP) to dehydroquinate (DHQ). The polypeptide is 3-dehydroquinate synthase (Rippkaea orientalis (strain PCC 8801 / RF-1) (Cyanothece sp. (strain PCC 8801))).